Reading from the N-terminus, the 85-residue chain is Putative membrane protein insertion efficiency factor (85 aa).

Residues 62-85 are disordered; that stretch reads KGGFDPVPLKKDKSASKHSHKHNH.

This sequence belongs to the UPF0161 family.

It localises to the cell membrane. Functionally, could be involved in insertion of integral membrane proteins into the membrane. The chain is Putative membrane protein insertion efficiency factor from Staphylococcus aureus (strain Mu3 / ATCC 700698).